A 367-amino-acid polypeptide reads, in one-letter code: Phosphoribosylaminoimidazole-succinocarboxamide synthase (367 aa).

This sequence belongs to the SAICAR synthetase family.

It carries out the reaction 5-amino-1-(5-phospho-D-ribosyl)imidazole-4-carboxylate + L-aspartate + ATP = (2S)-2-[5-amino-1-(5-phospho-beta-D-ribosyl)imidazole-4-carboxamido]succinate + ADP + phosphate + 2 H(+). It participates in purine metabolism; IMP biosynthesis via de novo pathway; 5-amino-1-(5-phospho-D-ribosyl)imidazole-4-carboxamide from 5-amino-1-(5-phospho-D-ribosyl)imidazole-4-carboxylate: step 1/2. In Vibrio atlanticus (strain LGP32) (Vibrio splendidus (strain Mel32)), this protein is Phosphoribosylaminoimidazole-succinocarboxamide synthase.